A 275-amino-acid chain; its full sequence is Nitrogenase iron protein 1 (275 aa).

9–16 contacts ATP; sequence GKGGIGKS. Residue Cys-97 participates in [4Fe-4S] cluster binding. An ADP-ribosylarginine; by dinitrogenase reductase ADP-ribosyltransferase modification is found at Arg-100. A [4Fe-4S] cluster-binding site is contributed by Cys-132.

This sequence belongs to the NifH/BchL/ChlL family. Homodimer. [4Fe-4S] cluster serves as cofactor. Post-translationally, the reversible ADP-ribosylation of Arg-100 inactivates the nitrogenase reductase and regulates nitrogenase activity.

The enzyme catalyses N2 + 8 reduced [2Fe-2S]-[ferredoxin] + 16 ATP + 16 H2O = H2 + 8 oxidized [2Fe-2S]-[ferredoxin] + 2 NH4(+) + 16 ADP + 16 phosphate + 6 H(+). The key enzymatic reactions in nitrogen fixation are catalyzed by the nitrogenase complex, which has 2 components: the iron protein and the molybdenum-iron protein. The polypeptide is Nitrogenase iron protein 1 (nifH1) (Methanothermobacter marburgensis (strain ATCC BAA-927 / DSM 2133 / JCM 14651 / NBRC 100331 / OCM 82 / Marburg) (Methanobacterium thermoautotrophicum)).